The primary structure comprises 406 residues: Enoyl-[acyl-carrier-protein] reductase [NADH] (406 aa).

NAD(+) is bound by residues G48–F53, F74–E75, D111–A112, and I140–A141. Y226 contacts substrate. Y236 (proton donor) is an active-site residue. NAD(+)-binding positions include K245 and L275–T277.

Belongs to the TER reductase family. In terms of assembly, monomer.

It catalyses the reaction a 2,3-saturated acyl-[ACP] + NAD(+) = a (2E)-enoyl-[ACP] + NADH + H(+). Its pathway is lipid metabolism; fatty acid biosynthesis. Functionally, involved in the final reduction of the elongation cycle of fatty acid synthesis (FAS II). Catalyzes the reduction of a carbon-carbon double bond in an enoyl moiety that is covalently linked to an acyl carrier protein (ACP). This Coxiella burnetii (strain RSA 331 / Henzerling II) protein is Enoyl-[acyl-carrier-protein] reductase [NADH].